Here is a 523-residue protein sequence, read N- to C-terminus: UDP-glucuronosyltransferase 2B16 (523 aa).

Positions 1–16 are cleaved as a signal peptide; the sequence is LLLLLQLSCCFSSGSC. Position 129 is an N6-succinyllysine (lysine 129). An N-linked (GlcNAc...) asparagine glycan is attached at asparagine 309. A helical transmembrane segment spans residues 487-503; the sequence is VIGFLLACLTITTYLVI.

This sequence belongs to the UDP-glycosyltransferase family.

It is found in the microsome membrane. The protein localises to the endoplasmic reticulum membrane. The catalysed reaction is glucuronate acceptor + UDP-alpha-D-glucuronate = acceptor beta-D-glucuronoside + UDP + H(+). Its function is as follows. UDPGT is of major importance in the conjugation and subsequent elimination of potentially toxic xenobiotics and endogenous compounds. Acts on small phenolic agents such as 2-beta-naphthol and 4-methylumbelliferone as well as bulky phenolic compounds like 2-hydroxy- and 4-hydroxybiphenyl. In contrast to 2B13 it is active toward 4-hydroxyesterone. The polypeptide is UDP-glucuronosyltransferase 2B16 (UGT2B16) (Oryctolagus cuniculus (Rabbit)).